The primary structure comprises 359 residues: Phospho-N-acetylmuramoyl-pentapeptide-transferase (359 aa).

A run of 10 helical transmembrane segments spans residues 3-23, 55-75, 80-100, 117-137, 156-176, 187-207, 231-251, 255-275, 280-300, and 334-354; these read QILI…PALI, VAII…GLAF, ISAS…VGFL, TAKT…ALGF, IATV…VVSA, LDGL…LITF, LAIV…WNAA, IFMG…ISVT, ILAV…VLQI, and FWLL…GEWL.

This sequence belongs to the glycosyltransferase 4 family. MraY subfamily. Requires Mg(2+) as cofactor.

The protein localises to the cell membrane. It carries out the reaction UDP-N-acetyl-alpha-D-muramoyl-L-alanyl-gamma-D-glutamyl-meso-2,6-diaminopimeloyl-D-alanyl-D-alanine + di-trans,octa-cis-undecaprenyl phosphate = di-trans,octa-cis-undecaprenyl diphospho-N-acetyl-alpha-D-muramoyl-L-alanyl-D-glutamyl-meso-2,6-diaminopimeloyl-D-alanyl-D-alanine + UMP. It participates in cell wall biogenesis; peptidoglycan biosynthesis. Catalyzes the initial step of the lipid cycle reactions in the biosynthesis of the cell wall peptidoglycan: transfers peptidoglycan precursor phospho-MurNAc-pentapeptide from UDP-MurNAc-pentapeptide onto the lipid carrier undecaprenyl phosphate, yielding undecaprenyl-pyrophosphoryl-MurNAc-pentapeptide, known as lipid I. The chain is Phospho-N-acetylmuramoyl-pentapeptide-transferase from Mycolicibacterium paratuberculosis (strain ATCC BAA-968 / K-10) (Mycobacterium paratuberculosis).